We begin with the raw amino-acid sequence, 363 residues long: MSNKKIIFFTGGGTGGHIFPGISIIQKLKELDNEIEFFWIGKKNSIEEKLIKEQNNIKFISIPCGKLRRYFSFQNFTDFFKVIFGIIKSFYILKKYKPQIVYATGGFVSTPTIIASSLLKIKRITHEMDLDPGLATKINSKFANKIYISFKESEKYFKNHKNIIHTGSPIRKEFLTPNPKIIKQLTQNTNKPIVSILGGSLGANALNNLALCIKKDAEIYFIHQSGKNLNDLREDNYIRRQFFNAEEMASIVKFSNIIISRAGAGAIKEFANACTCTILIPFKKGSRGDQIKNAKLLKTQNACIYIDEDEILNANILKIIKETLKDKEKINTLKANIKKFNNKNSSALIAQLLIKDIKETKSK.

UDP-N-acetyl-alpha-D-glucosamine is bound by residues 14-16 (TGG), arginine 171, serine 200, and glutamine 290.

This sequence belongs to the glycosyltransferase 28 family. MurG subfamily.

The protein localises to the cell inner membrane. It carries out the reaction di-trans,octa-cis-undecaprenyl diphospho-N-acetyl-alpha-D-muramoyl-L-alanyl-D-glutamyl-meso-2,6-diaminopimeloyl-D-alanyl-D-alanine + UDP-N-acetyl-alpha-D-glucosamine = di-trans,octa-cis-undecaprenyl diphospho-[N-acetyl-alpha-D-glucosaminyl-(1-&gt;4)]-N-acetyl-alpha-D-muramoyl-L-alanyl-D-glutamyl-meso-2,6-diaminopimeloyl-D-alanyl-D-alanine + UDP + H(+). Its pathway is cell wall biogenesis; peptidoglycan biosynthesis. Functionally, cell wall formation. Catalyzes the transfer of a GlcNAc subunit on undecaprenyl-pyrophosphoryl-MurNAc-pentapeptide (lipid intermediate I) to form undecaprenyl-pyrophosphoryl-MurNAc-(pentapeptide)GlcNAc (lipid intermediate II). The sequence is that of UDP-N-acetylglucosamine--N-acetylmuramyl-(pentapeptide) pyrophosphoryl-undecaprenol N-acetylglucosamine transferase from Borreliella afzelii (strain PKo) (Borrelia afzelii).